The chain runs to 349 residues: 4-hydroxy-3-methylbut-2-en-1-yl diphosphate synthase (flavodoxin) (349 aa).

4 residues coordinate [4Fe-4S] cluster: Cys265, Cys268, Cys300, and Glu307.

Belongs to the IspG family. [4Fe-4S] cluster serves as cofactor.

It catalyses the reaction (2E)-4-hydroxy-3-methylbut-2-enyl diphosphate + oxidized [flavodoxin] + H2O + 2 H(+) = 2-C-methyl-D-erythritol 2,4-cyclic diphosphate + reduced [flavodoxin]. It functions in the pathway isoprenoid biosynthesis; isopentenyl diphosphate biosynthesis via DXP pathway; isopentenyl diphosphate from 1-deoxy-D-xylulose 5-phosphate: step 5/6. Functionally, converts 2C-methyl-D-erythritol 2,4-cyclodiphosphate (ME-2,4cPP) into 1-hydroxy-2-methyl-2-(E)-butenyl 4-diphosphate. The protein is 4-hydroxy-3-methylbut-2-en-1-yl diphosphate synthase (flavodoxin) of Thermodesulfovibrio yellowstonii (strain ATCC 51303 / DSM 11347 / YP87).